Here is a 309-residue protein sequence, read N- to C-terminus: Prepilin leader peptidase/N-methyltransferase (309 aa).

A helical transmembrane segment spans residues 35–55 (MQLAFAIVLGLVVGSFLNVVV). Zn(2+)-binding residues include C96, C99, C121, and C124. Transmembrane regions (helical) follow at residues 147–167 (LALFGPSGAALAAFGLCAALL), 183–203 (LTLPLLWAGLCVNLWGTFASL), 207–227 (VIGAIAGYLFLWCILWLFKLL), 230–250 (IEGIGYGDLKLLAALGAWLGW), 253–273 (LPQVVLIAAVAGAAVGLVATW), and 288–308 (FLAAGGAATLFFGTPFYLLLG).

Belongs to the peptidase A24 family. It depends on Zn(2+) as a cofactor.

It is found in the cell inner membrane. It carries out the reaction Typically cleaves a -Gly-|-Phe- bond to release an N-terminal, basic peptide of 5-8 residues from type IV prepilin, and then N-methylates the new N-terminal amino group, the methyl donor being S-adenosyl-L-methionine.. Plays an essential role in type IV pili and type II pseudopili formation by proteolytically removing the leader sequence from substrate proteins and subsequently monomethylating the alpha-amino group of the newly exposed N-terminal phenylalanine. This chain is Prepilin leader peptidase/N-methyltransferase (gspO), found in Burkholderia pseudomallei (strain 1026b).